A 201-amino-acid chain; its full sequence is Holliday junction resolvase RecU (201 aa).

The interval 1–26 (MAIGYPNGKKYAASQEELPQQKRKAP) is disordered. Thr-87, Asp-89, Glu-102, and Gln-121 together coordinate Mg(2+).

Belongs to the RecU family. It depends on Mg(2+) as a cofactor.

It localises to the cytoplasm. It catalyses the reaction Endonucleolytic cleavage at a junction such as a reciprocal single-stranded crossover between two homologous DNA duplexes (Holliday junction).. Endonuclease that resolves Holliday junction intermediates in genetic recombination. Cleaves mobile four-strand junctions by introducing symmetrical nicks in paired strands. Promotes annealing of linear ssDNA with homologous dsDNA. Required for DNA repair, homologous recombination and chromosome segregation. This chain is Holliday junction resolvase RecU, found in Listeria monocytogenes serotype 4a (strain HCC23).